A 147-amino-acid polypeptide reads, in one-letter code: Cytochrome c-type biogenesis protein CcmE (147 aa).

The Cytoplasmic segment spans residues 1–9; the sequence is MKNLKKQRR. A helical; Signal-anchor for type II membrane protein transmembrane segment spans residues 10 to 30; that stretch reads IQVIALATVALVLSTALIGYA. At 31–147 the chain is on the periplasmic side; the sequence is MRDGINFFRA…EQGVYKGTEG (117 aa). Residues His-123 and Tyr-127 each contribute to the heme site.

This sequence belongs to the CcmE/CycJ family.

The protein resides in the cell inner membrane. Its function is as follows. Heme chaperone required for the biogenesis of c-type cytochromes. Transiently binds heme delivered by CcmC and transfers the heme to apo-cytochromes in a process facilitated by CcmF and CcmH. This Roseobacter denitrificans (strain ATCC 33942 / OCh 114) (Erythrobacter sp. (strain OCh 114)) protein is Cytochrome c-type biogenesis protein CcmE.